The chain runs to 174 residues: Small ribosomal subunit protein uS5 (174 aa).

Residues Ile20–Val83 form the S5 DRBM domain.

It belongs to the universal ribosomal protein uS5 family. Part of the 30S ribosomal subunit. Contacts proteins S4 and S8.

With S4 and S12 plays an important role in translational accuracy. Functionally, located at the back of the 30S subunit body where it stabilizes the conformation of the head with respect to the body. The chain is Small ribosomal subunit protein uS5 from Lactobacillus gasseri (strain ATCC 33323 / DSM 20243 / BCRC 14619 / CIP 102991 / JCM 1131 / KCTC 3163 / NCIMB 11718 / NCTC 13722 / AM63).